The following is a 154-amino-acid chain: Ribosome maturation factor RimP (154 aa).

The protein belongs to the RimP family.

The protein resides in the cytoplasm. Its function is as follows. Required for maturation of 30S ribosomal subunits. The chain is Ribosome maturation factor RimP from Clostridium kluyveri (strain ATCC 8527 / DSM 555 / NBRC 12016 / NCIMB 10680 / K1).